The chain runs to 112 residues: DNA-binding protein TGAM_1196 (112 aa).

This sequence belongs to the PDCD5 family.

This is DNA-binding protein TGAM_1196 from Thermococcus gammatolerans (strain DSM 15229 / JCM 11827 / EJ3).